Here is a 940-residue protein sequence, read N- to C-terminus: PTS system glucose-specific EIICBA component (940 aa).

The 284-residue stretch at 1–284 folds into the PTS EIIC type-1; first part domain; that stretch reads MQIKAQDTGQ…YAPLWYTSAG (284 aa). A run of 5 helical transmembrane segments spans residues 43 to 63, 83 to 103, 112 to 132, 175 to 195, and 209 to 229; these read LMIPIAVLPIAGIFLGVGDAI, GGDVVFANLPILFAIAIAITF, FSAFVFWAAMNGFMSSLILPF, VFGGIIVGALTSVLYKKFYAI, and FVPIICFVVAIPVALILLMIW. The segment at 285–478 is unknown; sequence GSLQEIVNQQ…VNSFRVAVES (194 aa). The PTS EIIC type-1; second part domain maps to 479 to 630; the sequence is LNPAQYSQGK…FNLATPGRGG (152 aa). 5 helical membrane-spanning segments follow: residues 487-507, 515-535, 537-557, 564-584, and 598-618; these read GKFPFMLFGIPAAGVAMILAA, AASIVGSAAFTSFLTGITEPF, FTFLFLAPWLFYGVHAVLAAV, ILGANVGQTFSGSFIDFILYG, and LVPIIGLFLAAIYFPTFYFLI. The PTS EIIB type-1 domain maps to 661–743; that stretch reads QIEAGILLQA…QDIIQGKVNW (83 aa). Residue Cys683 is the Phosphocysteine intermediate; for EIIB activity of the active site. A PTS EIIA type-1 domain is found at 794–907; that stretch reads DETFKQKLVG…NPITPFVVMK (114 aa). Residue His847 is the Tele-phosphohistidine intermediate; for EIIA activity of the active site.

It is found in the cell membrane. The enzyme catalyses N(pros)-phospho-L-histidyl-[protein] + D-glucose(out) = D-glucose 6-phosphate(in) + L-histidyl-[protein]. Its function is as follows. The phosphoenolpyruvate-dependent sugar phosphotransferase system (sugar PTS), a major carbohydrate active transport system, catalyzes the phosphorylation of incoming sugar substrates concomitantly with their translocation across the cell membrane. This system is involved in glucose transport. This is PTS system glucose-specific EIICBA component (ptsG) from Mycoplasma pneumoniae (strain ATCC 29342 / M129 / Subtype 1) (Mycoplasmoides pneumoniae).